The following is a 72-amino-acid chain: Large ribosomal subunit protein bL31 (72 aa).

Zn(2+) is bound by residues C16, C18, C38, and C41.

Belongs to the bacterial ribosomal protein bL31 family. Type A subfamily. In terms of assembly, part of the 50S ribosomal subunit. The cofactor is Zn(2+).

Its function is as follows. Binds the 23S rRNA. The sequence is that of Large ribosomal subunit protein bL31 from Aromatoleum aromaticum (strain DSM 19018 / LMG 30748 / EbN1) (Azoarcus sp. (strain EbN1)).